Reading from the N-terminus, the 327-residue chain is Glycerol-3-phosphate dehydrogenase [NAD(P)+] (327 aa).

NADPH is bound by residues Trp11, His30, and Lys103. Sn-glycerol 3-phosphate is bound by residues Lys103, Gly131, and Ser133. Ala135 contributes to the NADPH binding site. Residues Lys186, Asp243, Ser253, Arg254, and Asn255 each coordinate sn-glycerol 3-phosphate. The Proton acceptor role is filled by Lys186. Residue Arg254 coordinates NADPH. Val281 and Glu283 together coordinate NADPH.

Belongs to the NAD-dependent glycerol-3-phosphate dehydrogenase family.

It is found in the cytoplasm. It catalyses the reaction sn-glycerol 3-phosphate + NAD(+) = dihydroxyacetone phosphate + NADH + H(+). The catalysed reaction is sn-glycerol 3-phosphate + NADP(+) = dihydroxyacetone phosphate + NADPH + H(+). The protein operates within membrane lipid metabolism; glycerophospholipid metabolism. Its function is as follows. Catalyzes the reduction of the glycolytic intermediate dihydroxyacetone phosphate (DHAP) to sn-glycerol 3-phosphate (G3P), the key precursor for phospholipid synthesis. The sequence is that of Glycerol-3-phosphate dehydrogenase [NAD(P)+] from Wolbachia sp. subsp. Brugia malayi (strain TRS).